A 172-amino-acid chain; its full sequence is Adrenodoxin-like protein 1, mitochondrial (172 aa).

The 2Fe-2S ferredoxin-type domain occupies 57-159 (VNITYVDKDG…GMELELPKAT (103 aa)). Cys-94, Cys-100, Cys-103, and Cys-140 together coordinate [2Fe-2S] cluster.

Belongs to the adrenodoxin/putidaredoxin family. [2Fe-2S] cluster serves as cofactor.

It is found in the mitochondrion matrix. Required for ecdysteroidogenesis in the prothoracic gland which is necessary for larval to pupal transition. This chain is Adrenodoxin-like protein 1, mitochondrial, found in Drosophila melanogaster (Fruit fly).